We begin with the raw amino-acid sequence, 111 residues long: Colipase (111 aa).

The first 17 residues, methionine 1–alanine 17, serve as a signal peptide directing secretion. A propeptide spans alanine 18–arginine 22 (enterostatin, activation peptide). Cystine bridges form between cysteine 34-cysteine 45, cysteine 40-cysteine 56, cysteine 44-cysteine 78, cysteine 66-cysteine 86, and cysteine 80-cysteine 104.

It belongs to the colipase family. Forms a 1:1 stoichiometric complex with pancreatic lipase. In terms of tissue distribution, expressed by the pancreas.

Its subcellular location is the secreted. Functionally, colipase is a cofactor of pancreatic lipase. It allows the lipase to anchor itself to the lipid-water interface. Without colipase the enzyme is washed off by bile salts, which have an inhibitory effect on the lipase. In terms of biological role, enterostatin has a biological activity as a satiety signal. The sequence is that of Colipase (CLPS) from Myocastor coypus (Coypu).